Here is a 406-residue protein sequence, read N- to C-terminus: 4-hydroxy-3-methylbut-2-enyl diphosphate reductase (406 aa).

C66 contacts [4Fe-4S] cluster. (2E)-4-hydroxy-3-methylbut-2-enyl diphosphate is bound at residue H96. H96 contacts dimethylallyl diphosphate. An isopentenyl diphosphate-binding site is contributed by H96. C157 contacts [4Fe-4S] cluster. Residue H185 participates in (2E)-4-hydroxy-3-methylbut-2-enyl diphosphate binding. H185 is a dimethylallyl diphosphate binding site. H185 lines the isopentenyl diphosphate pocket. E187 acts as the Proton donor in catalysis. T250 is a (2E)-4-hydroxy-3-methylbut-2-enyl diphosphate binding site. C288 provides a ligand contact to [4Fe-4S] cluster. S317, S318, N319, and S379 together coordinate (2E)-4-hydroxy-3-methylbut-2-enyl diphosphate. Residues S317, S318, N319, and S379 each coordinate dimethylallyl diphosphate. 4 residues coordinate isopentenyl diphosphate: S317, S318, N319, and S379.

This sequence belongs to the IspH family. [4Fe-4S] cluster is required as a cofactor.

The enzyme catalyses isopentenyl diphosphate + 2 oxidized [2Fe-2S]-[ferredoxin] + H2O = (2E)-4-hydroxy-3-methylbut-2-enyl diphosphate + 2 reduced [2Fe-2S]-[ferredoxin] + 2 H(+). The catalysed reaction is dimethylallyl diphosphate + 2 oxidized [2Fe-2S]-[ferredoxin] + H2O = (2E)-4-hydroxy-3-methylbut-2-enyl diphosphate + 2 reduced [2Fe-2S]-[ferredoxin] + 2 H(+). Its pathway is isoprenoid biosynthesis; dimethylallyl diphosphate biosynthesis; dimethylallyl diphosphate from (2E)-4-hydroxy-3-methylbutenyl diphosphate: step 1/1. It participates in isoprenoid biosynthesis; isopentenyl diphosphate biosynthesis via DXP pathway; isopentenyl diphosphate from 1-deoxy-D-xylulose 5-phosphate: step 6/6. Functionally, catalyzes the conversion of 1-hydroxy-2-methyl-2-(E)-butenyl 4-diphosphate (HMBPP) into a mixture of isopentenyl diphosphate (IPP) and dimethylallyl diphosphate (DMAPP). Acts in the terminal step of the DOXP/MEP pathway for isoprenoid precursor biosynthesis. The polypeptide is 4-hydroxy-3-methylbut-2-enyl diphosphate reductase (Synechococcus sp. (strain RCC307)).